A 398-amino-acid chain; its full sequence is Acetate kinase 1 (398 aa).

Asn9 is a Mg(2+) binding site. Lys16 is a binding site for ATP. Position 89 (Arg89) interacts with substrate. Asp146 serves as the catalytic Proton donor/acceptor. Residues 206 to 210 (HLGNG), 281 to 283 (DCR), and 329 to 333 (GIGEN) contribute to the ATP site. Glu384 contributes to the Mg(2+) binding site.

This sequence belongs to the acetokinase family. As to quaternary structure, homodimer. Mg(2+) serves as cofactor. It depends on Mn(2+) as a cofactor.

It localises to the cytoplasm. It catalyses the reaction acetate + ATP = acetyl phosphate + ADP. It participates in metabolic intermediate biosynthesis; acetyl-CoA biosynthesis; acetyl-CoA from acetate: step 1/2. In terms of biological role, catalyzes the formation of acetyl phosphate from acetate and ATP. Can also catalyze the reverse reaction. The chain is Acetate kinase 1 from Vibrio parahaemolyticus serotype O3:K6 (strain RIMD 2210633).